The sequence spans 171 residues: Putative pre-16S rRNA nuclease (171 aa).

This sequence belongs to the YqgF nuclease family.

The protein resides in the cytoplasm. Functionally, could be a nuclease involved in processing of the 5'-end of pre-16S rRNA. This is Putative pre-16S rRNA nuclease from Corynebacterium diphtheriae (strain ATCC 700971 / NCTC 13129 / Biotype gravis).